The following is a 270-amino-acid chain: Urease accessory protein UreD (270 aa).

This sequence belongs to the UreD family. UreD, UreF and UreG form a complex that acts as a GTP-hydrolysis-dependent molecular chaperone, activating the urease apoprotein by helping to assemble the nickel containing metallocenter of UreC. The UreE protein probably delivers the nickel.

The protein resides in the cytoplasm. In terms of biological role, required for maturation of urease via the functional incorporation of the urease nickel metallocenter. This chain is Urease accessory protein UreD, found in Actinobacillus pleuropneumoniae serotype 3 (strain JL03).